A 288-amino-acid polypeptide reads, in one-letter code: Acetyl-coenzyme A carboxylase carboxyl transferase subunit beta (288 aa).

The CoA carboxyltransferase N-terminal domain maps to 34–288 (LFAKCPGCKQ…TLLSFHGGVQ (255 aa)). Zn(2+) contacts are provided by cysteine 38, cysteine 41, cysteine 56, and cysteine 59. Residues 38 to 59 (CPGCKQAIYQKDLGQAKICPNC) form a C4-type zinc finger.

The protein belongs to the AccD/PCCB family. Acetyl-CoA carboxylase is a heterohexamer composed of biotin carboxyl carrier protein (AccB), biotin carboxylase (AccC) and two subunits each of ACCase subunit alpha (AccA) and ACCase subunit beta (AccD). Zn(2+) is required as a cofactor.

The protein localises to the cytoplasm. The enzyme catalyses N(6)-carboxybiotinyl-L-lysyl-[protein] + acetyl-CoA = N(6)-biotinyl-L-lysyl-[protein] + malonyl-CoA. It functions in the pathway lipid metabolism; malonyl-CoA biosynthesis; malonyl-CoA from acetyl-CoA: step 1/1. In terms of biological role, component of the acetyl coenzyme A carboxylase (ACC) complex. Biotin carboxylase (BC) catalyzes the carboxylation of biotin on its carrier protein (BCCP) and then the CO(2) group is transferred by the transcarboxylase to acetyl-CoA to form malonyl-CoA. This Streptococcus thermophilus (strain CNRZ 1066) protein is Acetyl-coenzyme A carboxylase carboxyl transferase subunit beta.